The sequence spans 610 residues: Myoneurin (610 aa).

Residues 24–89 (CDCTIVIGEF…IYTGTLNLDS (66 aa)) enclose the BTB domain. Residues 169 to 197 (QGALAKKSSQTKKKKKAFNSPKTGQNKTV) are disordered. 2 consecutive short sequence motifs (nuclear localization signal) follow at residues 174–190 (KKSSQTKKKKKAFNSPK) and 257–262 (KRKRGK). The span at 188–197 (SPKTGQNKTV) shows a compositional bias: polar residues. Phosphoserine is present on Ser289. 8 C2H2-type zinc fingers span residues 302-324 (PMCNTCGKVFSEASSLRRHMRIH), 330-352 (YVCHLCGKAFTQCNQLKTHVRTH), 358-381 (YKCELCDKGFAQKCQLVFHSRMHH), 387-409 (YKCDVCNLQFATSSNLKIHARKH), 415-437 (YVCDRCGQRFAQASTLTYHVRRH), 443-465 (YVCDTCGKAFAVSSSLITHSRKH), 471-493 (YICGICGKSFISSGELNKHFRSH), and 499-522 (FICELCGNSYTDIKNLKKHKTKVH). The disordered stretch occupies residues 521–556 (VHSGADKTLDSSAEDHTLSEQDSIQKSPLSETMDVK). Positions 523-539 (SGADKTLDSSAEDHTLS) are enriched in basic and acidic residues. The span at 540–550 (EQDSIQKSPLS) shows a compositional bias: polar residues.

This sequence belongs to the krueppel C2H2-type zinc-finger protein family. Mainly expressed in the neuromuscular system. Located in and around synaptic myonuclei in adult muscle. Expression is dysregulated after nerve injury. Also found in the testis, ovary and placenta.

The protein resides in the nucleus. This Homo sapiens (Human) protein is Myoneurin (MYNN).